We begin with the raw amino-acid sequence, 300 residues long: MILEGGGVMNLNPGNNLLHQPPAWTDSYSTCNVSSGFFGGQWHEIHPQYWTKYQVWEWLQHLLDTNQLDASCIPFQEFDINGEHLCSMSLQEFTRAAGTAGQLLYSNLQHLKWNGQCSSDLFQSTHNVIVKTEQTEPSIVNTWKDENYLYDTNYGSTVDLLDSKTFCRAQISMTTTSHLPVAESPDMKKEQDPPAKCHTKKHNPRGTHLWEFIRDILLNPDKNPGLIKWEDRSEGVFRFLKSEAVAQLWGKKKNNSSMTYEKLSRAMRYYYKREILERVDGRRLVYKFGKNARGWRENEN.

Positions 29–115 (STCNVSSGFF…SNLQHLKWNG (87 aa)) constitute a PNT domain. Residues 183-202 (ESPDMKKEQDPPAKCHTKKH) are disordered. The segment covering 185–195 (PDMKKEQDPPA) has biased composition (basic and acidic residues). The segment at residues 207–289 (THLWEFIRDI…DGRRLVYKFG (83 aa)) is a DNA-binding region (ETS).

The protein belongs to the ETS family.

Its subcellular location is the nucleus. Its function is as follows. Transcriptional activator that may play a role in regulating epithelial cell differentiation and proliferation. May act as a repressor for a specific subset of ETS/AP-1-responsive genes, and as a modulator of the nuclear response to mitogen-activated protein kinase signaling cascades. Binds to DNA sequences containing the consensus nucleotide core sequence GGAA. Involved in regulation of TNFRSF10B/DR5 expression through Ets-binding sequences on the TNFRSF10B/DR5 promoter. This chain is ETS homologous factor (EHF), found in Pan troglodytes (Chimpanzee).